A 310-amino-acid chain; its full sequence is Malate dehydrogenase (310 aa).

NAD(+) contacts are provided by residues 7–13 and Asp-34; that span reads GAAGGIG. Substrate is bound by residues Arg-81 and Arg-87. NAD(+)-binding positions include Asn-94 and 117–119; that span reads ITN. The substrate site is built by Asn-119 and Arg-153. Residue His-177 is the Proton acceptor of the active site. Met-227 contributes to the NAD(+) binding site.

This sequence belongs to the LDH/MDH superfamily. MDH type 1 family. Homodimer.

The enzyme catalyses (S)-malate + NAD(+) = oxaloacetate + NADH + H(+). Its function is as follows. Catalyzes the reversible oxidation of malate to oxaloacetate. This chain is Malate dehydrogenase, found in Idiomarina loihiensis (strain ATCC BAA-735 / DSM 15497 / L2-TR).